The chain runs to 328 residues: Phosphate acyltransferase (328 aa).

This sequence belongs to the PlsX family. In terms of assembly, homodimer. Probably interacts with PlsY.

The protein localises to the cytoplasm. It catalyses the reaction a fatty acyl-[ACP] + phosphate = an acyl phosphate + holo-[ACP]. Its pathway is lipid metabolism; phospholipid metabolism. Functionally, catalyzes the reversible formation of acyl-phosphate (acyl-PO(4)) from acyl-[acyl-carrier-protein] (acyl-ACP). This enzyme utilizes acyl-ACP as fatty acyl donor, but not acyl-CoA. This chain is Phosphate acyltransferase, found in Staphylococcus aureus (strain USA300).